Reading from the N-terminus, the 316-residue chain is Ornithine carbamoyltransferase (316 aa).

Residues 57-60 (STRT), glutamine 84, arginine 108, and 135-138 (HPCQ) contribute to the carbamoyl phosphate site. Residues asparagine 166, aspartate 230, and 234–235 (SM) each bind L-ornithine. Carbamoyl phosphate is bound by residues 269-270 (CL) and arginine 297.

Belongs to the aspartate/ornithine carbamoyltransferase superfamily. OTCase family.

It localises to the cytoplasm. The catalysed reaction is carbamoyl phosphate + L-ornithine = L-citrulline + phosphate + H(+). Its pathway is amino-acid biosynthesis; L-arginine biosynthesis; L-arginine from L-ornithine and carbamoyl phosphate: step 1/3. In terms of biological role, reversibly catalyzes the transfer of the carbamoyl group from carbamoyl phosphate (CP) to the N(epsilon) atom of ornithine (ORN) to produce L-citrulline. In Bacillus thuringiensis subsp. konkukian (strain 97-27), this protein is Ornithine carbamoyltransferase.